Consider the following 1044-residue polypeptide: MFKKVENKVHFPQLEEKILQFWNHNKIFEKSMKQREGCEEFTFYDGPPFATGLPHFGHFVPNTIKDIIPRYQTMKGKNVKRYFGWDTHGLPVEYEVEKSLKLSGRYEIEQYGIDKFNEECRNIVLRYTKEWKKIITRLGRWVDFENNYKTMDLTFMESVWWVFKTLYNKGLIYESYYVLPYSPKLATPLSNFEVNLGEYKEIHDPSLTIKFKIKDKNEYLLAWTTTPWTLPTNLGIAVGKDIDYSKVVDQEKNEIYIIGTKRLNHYYQDENKYVIIEQFKGEHLKGIEYEPLFDYFVNQRNKGAFKIHTAEYVTTDDGTGIVHIAPFGEEDYQILKKNTQTDMITPIDAECKFTSEVKDFEGLFVKDADNKIIEKLKSMNLLFKRENYLHRYPFCYRTNSPLIYRPISSWFVNIEKIKEKLIRSNEQINWIPEHLKKGRFGKWLENARDWAISRNRFWGNPIPIWKCSKTGNKICIGSREELEKLSGQKIIDLHKDKIDKITWPSKYGGTYVRTSEVLDCWFESGSMPYASKHYPFKDKDKFQNIFPADFIAEGLDQTRGWFYTLTILGTALFEKTAFKNVIVNGLVLSSDGKKMSKSLKNYTDPIQIINTFGADALRLYLIMSPVIKADDLKYSDDGVKDVLKNIIIPIWNAYSFFITYAIIDKFTPNNYVNLYKTNILDKWIISEIESLKQILNEEIDKYNLTKSIEVLLTFIDKLNNWYIRRSRRRFWKSENDNDKIDAYETLYYTLKNLMLMLAPFIPFLTEEIYQNLKTKNEKESIHLNNYPQSIKELINIELEEKMNFTRKVITIARALRASHNIKIRKPIKTIYIITKNHKEQNTLREMTEIILEEINAKEIKIKSNEEELVTYKAKANFKELGSKLGTNMKSVALAITKLSNEDILEIINGNKHTITINNNTYDITLKDIILERHERKNLKVINEDSITIGLDTLITEELYLEGLSRELIRKVQNLRKESNFNVTDRIILYTNNDEILTKIINNFENYIKTETLAITIEINNKKALTTLELDEEISVNIGIEKCLN.

The 'HIGH' region motif lies at 48–58 (PFATGLPHFGH). The 'KMSKS' region motif lies at 594–598 (KMSKS). K597 contacts ATP.

This sequence belongs to the class-I aminoacyl-tRNA synthetase family. IleS type 2 subfamily. In terms of assembly, monomer. Zn(2+) is required as a cofactor.

It localises to the cytoplasm. It carries out the reaction tRNA(Ile) + L-isoleucine + ATP = L-isoleucyl-tRNA(Ile) + AMP + diphosphate. Its function is as follows. Catalyzes the attachment of isoleucine to tRNA(Ile). As IleRS can inadvertently accommodate and process structurally similar amino acids such as valine, to avoid such errors it has two additional distinct tRNA(Ile)-dependent editing activities. One activity is designated as 'pretransfer' editing and involves the hydrolysis of activated Val-AMP. The other activity is designated 'posttransfer' editing and involves deacylation of mischarged Val-tRNA(Ile). This chain is Isoleucine--tRNA ligase, found in Borrelia recurrentis (strain A1).